The sequence spans 246 residues: Submandibular gland secretory Glx-rich protein CA (246 aa).

The N-terminal stretch at 1–18 (MLVVLLTAALLALSSAQG) is a signal peptide. Residues 14–223 (SSAQGTDEEV…SGRPKKPLLP (210 aa)) form a disordered region. 7 stretches are compositionally biased toward low complexity: residues 39 to 50 (PVDSGSDPPSAD), 58 to 71 (EGES…EPPA), 81 to 93 (QQEP…QEPP), 104 to 116 (QQEP…QEPP), 127 to 141 (QQEP…PPAT), 150 to 159 (QQESTQAENQ), and 178 to 196 (VESP…QQTN). 5 consecutive repeat copies span residues 67–89 (EEPP…QAEN), 90–112 (QEPP…QAEN), 113–135 (QEPP…QAED), 136–158 (QQPP…QAEN), and 159–181 (QEPS…VESP). The tract at residues 67–181 (EEPPATSGSE…QPEEGNVESP (115 aa)) is 5 X 23 AA tandem repeats. A compositionally biased stretch (basic and acidic residues) spans 197-216 (PEEKPPAPKTQEEPQHDSGR).

In terms of tissue distribution, submandibular gland acinar cells.

The protein resides in the secreted. Its function is as follows. GRP proteins have a marked affinity for hydroxyapatite. They may play a role in the formation of the protective acquired pellicle at the saliva-tooth interface. This is Submandibular gland secretory Glx-rich protein CA (Grpca) from Rattus norvegicus (Rat).